The following is an 802-amino-acid chain: Pyrophosphate-energized membrane proton pump 3 (802 aa).

6 helical membrane passes run 41–61, 66–86, 118–138, 160–180, 206–226, and 246–266; these read LNVRALSVLLLLSFGGIFYMG, PIIVFVFVVCIISFMLSVYLT, YGTISKMAFLLAFVILCIYLF, VAAFLLGALCSGIAGYVGMWV, AGGFSALVVVGMAVIGIAILY, and LPLLLVGYGFGASFVALFAQL. Substrate is bound at residue lysine 273. Residues aspartate 276, aspartate 280, and aspartate 306 each contribute to the Mg(2+) site. Helical transmembrane passes span 348-368, 386-406, 421-441, 468-491, and 511-531; these read FILFPLVVHSFDLVISSIGIL, MVVLQKGYSLTIILAVLTFGA, WLNFFMCGLVGIITAYVFVWI, IIAGVSLGLESTALPVLVISVAII, and GGLFGTAVATMGMLSTAAYVL. Residues aspartate 541 and asparagine 568 each coordinate Mg(2+). The next 4 helical transmembrane spans lie at 577 to 597, 615 to 635, 686 to 706, and 716 to 736; these read FAIGSAALASFLLFSAYMDEV, VFIGGLLGAMLIFLFSAWACA, GALAIISPIAVGFVFRILGYY, and VVAAMLMFATVCGILMALFLN. Aspartate 743 and aspartate 773 together coordinate Mg(2+). Substrate is bound at residue lysine 776. Residues 782-802 form a helical membrane-spanning segment; that stretch reads SIHVLIKMLATITLVMAPIFL.

It belongs to the H(+)-translocating pyrophosphatase (TC 3.A.10) family. K(+)-insensitive subfamily. As to quaternary structure, monomer.

It is found in the golgi apparatus membrane. The catalysed reaction is diphosphate + H2O + H(+)(in) = 2 phosphate + 2 H(+)(out). The polypeptide is Pyrophosphate-energized membrane proton pump 3 (AVPL2) (Arabidopsis thaliana (Mouse-ear cress)).